We begin with the raw amino-acid sequence, 268 residues long: Phosphatidylglycerol--prolipoprotein diacylglyceryl transferase (268 aa).

The next 7 membrane-spanning stretches (helical) occupy residues 14–34 (IIFS…LIGF), 60–80 (LLFN…VLFY), 95–115 (VWEG…AMLV), 124–144 (FWVV…MGRI), 176–196 (SQLY…NWFI), 203–223 (GSVA…VEFF), and 238–258 (ISMG…FIVL). Position 143 (R143) interacts with a 1,2-diacyl-sn-glycero-3-phospho-(1'-sn-glycerol).

Belongs to the Lgt family.

The protein resides in the cell inner membrane. The catalysed reaction is L-cysteinyl-[prolipoprotein] + a 1,2-diacyl-sn-glycero-3-phospho-(1'-sn-glycerol) = an S-1,2-diacyl-sn-glyceryl-L-cysteinyl-[prolipoprotein] + sn-glycerol 1-phosphate + H(+). Its pathway is protein modification; lipoprotein biosynthesis (diacylglyceryl transfer). Its function is as follows. Catalyzes the transfer of the diacylglyceryl group from phosphatidylglycerol to the sulfhydryl group of the N-terminal cysteine of a prolipoprotein, the first step in the formation of mature lipoproteins. This chain is Phosphatidylglycerol--prolipoprotein diacylglyceryl transferase, found in Mannheimia succiniciproducens (strain KCTC 0769BP / MBEL55E).